We begin with the raw amino-acid sequence, 365 residues long: Methylthioribose-1-phosphate isomerase (365 aa).

Substrate-binding positions include 53-55 (RGA), R90, and Q201. The active-site Proton donor is D242. A substrate-binding site is contributed by 252 to 253 (NK).

This sequence belongs to the eIF-2B alpha/beta/delta subunits family. MtnA subfamily.

It carries out the reaction 5-(methylsulfanyl)-alpha-D-ribose 1-phosphate = 5-(methylsulfanyl)-D-ribulose 1-phosphate. It functions in the pathway amino-acid biosynthesis; L-methionine biosynthesis via salvage pathway; L-methionine from S-methyl-5-thio-alpha-D-ribose 1-phosphate: step 1/6. Catalyzes the interconversion of methylthioribose-1-phosphate (MTR-1-P) into methylthioribulose-1-phosphate (MTRu-1-P). This is Methylthioribose-1-phosphate isomerase from Methylorubrum populi (strain ATCC BAA-705 / NCIMB 13946 / BJ001) (Methylobacterium populi).